Reading from the N-terminus, the 126-residue chain is UPF0102 protein TP_0913 (126 aa).

Belongs to the UPF0102 family.

The protein is UPF0102 protein TP_0913 of Treponema pallidum (strain Nichols).